A 371-amino-acid chain; its full sequence is Zinc transporter ZIP13 (371 aa).

Over 1–7 the chain is Lumenal; sequence MPGCPCP. The helical transmembrane segment at 8-28 threads the bilayer; sequence GCGMAGPRLLFLTALALELLE. The Cytoplasmic segment spans residues 29 to 68; sequence RAGGSQPALRSRGTATACRLDNKESESWGALLSGERLDTW. Residues 69–89 traverse the membrane as a helical segment; it reads ICSLLGSLMVGLSGVFPLLVI. At 90-108 the chain is on the lumenal side; it reads PLEMGTMLRSEAGAWRLKQ. The helical transmembrane segment at 109–129 threads the bilayer; it reads LLSFALGGLLGNVFLHLLPEA. The Cytoplasmic portion of the chain corresponds to 130-149; the sequence is WAYTCSASPGGEGQSLQQQQ. A helical membrane pass occupies residues 150–170; that stretch reads QLGLWVIAGILTFLALEKMFL. Residues 171–235 lie on the Lumenal side of the membrane; it reads DSKEEGTSQA…TIDNFTHGLA (65 aa). A helical transmembrane segment spans residues 236-256; that stretch reads VAASFLVSKKIGLLTTMAILL. Residues 257–262 carry the XEXPHE-motif motif; that stretch reads HEIPHE. Over 257-278 the chain is Cytoplasmic; the sequence is HEIPHEVGDFAILLRAGFDRWS. A helical membrane pass occupies residues 279–299; sequence AAKLQLSTALGGLLGAGFAIC. Over 300-316 the chain is Lumenal; sequence TQSPKGVVGCSPAAEET. Residues 317–337 traverse the membrane as a helical segment; the sequence is AAWVLPFTSGGFLYIALVNVL. The Cytoplasmic portion of the chain corresponds to 338–349; the sequence is PDLLEEEDPWRS. Residues 350–370 form a helical membrane-spanning segment; that stretch reads LQQLLLLCAGIVVMVLFSLFV. Residue Asp-371 is a topological domain, lumenal.

It belongs to the ZIP transporter (TC 2.A.5) family. Homodimer.

The protein localises to the golgi apparatus membrane. It is found in the cytoplasmic vesicle membrane. It localises to the endoplasmic reticulum membrane. The enzyme catalyses Zn(2+)(in) = Zn(2+)(out). Functionally, functions as a zinc transporter transporting Zn(2+) from the Golgi apparatus to the cytosol and thus influences the zinc level at least in areas of the cytosol. May regulate beige adipocyte differentiation. This Homo sapiens (Human) protein is Zinc transporter ZIP13.